Reading from the N-terminus, the 319-residue chain is HTH-type transcriptional regulator YidZ (319 aa).

The region spanning 8-65 is the HTH lysR-type domain; it reads LDLNLLLCLQLLMQERSVTKAAKRMNVTPSAVSKSLAKLRAWFDDPLFVNSPLGLSPT. Positions 25–44 form a DNA-binding region, H-T-H motif; that stretch reads VTKAAKRMNVTPSAVSKSLA.

It belongs to the LysR transcriptional regulatory family.

Involved in anaerobic NO protection. The polypeptide is HTH-type transcriptional regulator YidZ (Escherichia coli O6:H1 (strain CFT073 / ATCC 700928 / UPEC)).